A 143-amino-acid polypeptide reads, in one-letter code: uncharacterized protein (143 aa).

4 consecutive transmembrane segments (helical) span residues 7–29 (LFLFLHVVLATFWVGGMLFLSLV), 52–74 (FSLYGTFLSLFLLFVTGLVNTYL), 87–105 (LGVFFVVVFISLLHDLWAG), and 120–142 (WLGILNLILSLLLVYLGVRIRLG).

The protein localises to the cell membrane. This is an uncharacterized protein from Aquifex aeolicus (strain VF5).